The following is a 274-amino-acid chain: Serine acetyltransferase (274 aa).

This sequence belongs to the transferase hexapeptide repeat family.

The protein localises to the cytoplasm. It catalyses the reaction L-serine + acetyl-CoA = O-acetyl-L-serine + CoA. It participates in amino-acid biosynthesis; L-cysteine biosynthesis; L-cysteine from L-serine: step 1/2. The sequence is that of Serine acetyltransferase (cysE) from Buchnera aphidicola subsp. Acyrthosiphon pisum (strain APS) (Acyrthosiphon pisum symbiotic bacterium).